A 362-amino-acid chain; its full sequence is Fiber protein (362 aa).

It belongs to the adenoviridae fiber family. As to quaternary structure, homotrimer. Interacts with host receptor CXCAR. Interacts (via N-terminal tail region) with pentons.

It is found in the virion. The protein localises to the host nucleus. Functionally, forms spikes that protrude from each vertex of the icosahedral capsid. Interacts with host receptor CXCAR to provide virion initial attachment to target cell. Fiber proteins are shed during virus entry, when virus is still at the cell surface. In Homo sapiens (Human), this protein is Fiber protein.